Here is a 158-residue protein sequence, read N- to C-terminus: NAD(P)H-quinone oxidoreductase subunit J, chloroplastic (158 aa).

The protein belongs to the complex I 30 kDa subunit family. NDH is composed of at least 16 different subunits, 5 of which are encoded in the nucleus.

The protein localises to the plastid. The protein resides in the chloroplast thylakoid membrane. The catalysed reaction is a plastoquinone + NADH + (n+1) H(+)(in) = a plastoquinol + NAD(+) + n H(+)(out). It carries out the reaction a plastoquinone + NADPH + (n+1) H(+)(in) = a plastoquinol + NADP(+) + n H(+)(out). Its function is as follows. NDH shuttles electrons from NAD(P)H:plastoquinone, via FMN and iron-sulfur (Fe-S) centers, to quinones in the photosynthetic chain and possibly in a chloroplast respiratory chain. The immediate electron acceptor for the enzyme in this species is believed to be plastoquinone. Couples the redox reaction to proton translocation, and thus conserves the redox energy in a proton gradient. This Fagopyrum esculentum subsp. ancestrale (Wild buckwheat) protein is NAD(P)H-quinone oxidoreductase subunit J, chloroplastic.